A 440-amino-acid polypeptide reads, in one-letter code: Asparagine--tRNA ligase (440 aa).

Belongs to the class-II aminoacyl-tRNA synthetase family. As to quaternary structure, homodimer.

It localises to the cytoplasm. The enzyme catalyses tRNA(Asn) + L-asparagine + ATP = L-asparaginyl-tRNA(Asn) + AMP + diphosphate + H(+). The polypeptide is Asparagine--tRNA ligase (Roseiflexus castenholzii (strain DSM 13941 / HLO8)).